A 275-amino-acid chain; its full sequence is Large ribosomal subunit protein uL2 (275 aa).

Disordered regions lie at residues 28 to 59 (KPYAPLLDTQSSTAGRNNNGHITTRHKGGGHK) and 224 to 275 (AMNP…RHKR). The segment covering 35 to 46 (DTQSSTAGRNNN) has biased composition (polar residues). The segment covering 50-59 (TTRHKGGGHK) has biased composition (basic residues).

It belongs to the universal ribosomal protein uL2 family. Part of the 50S ribosomal subunit. Forms a bridge to the 30S subunit in the 70S ribosome.

Functionally, one of the primary rRNA binding proteins. Required for association of the 30S and 50S subunits to form the 70S ribosome, for tRNA binding and peptide bond formation. It has been suggested to have peptidyltransferase activity; this is somewhat controversial. Makes several contacts with the 16S rRNA in the 70S ribosome. This chain is Large ribosomal subunit protein uL2, found in Paraburkholderia phymatum (strain DSM 17167 / CIP 108236 / LMG 21445 / STM815) (Burkholderia phymatum).